The following is a 335-amino-acid chain: Nucleotide-binding protein CYA_0911 (335 aa).

ATP is bound at residue Gly20–Thr27. Residues Ala306 to Asp335 form a disordered region.

It belongs to the RapZ-like family.

Displays ATPase and GTPase activities. The protein is Nucleotide-binding protein CYA_0911 of Synechococcus sp. (strain JA-3-3Ab) (Cyanobacteria bacterium Yellowstone A-Prime).